A 65-amino-acid chain; its full sequence is Large ribosomal subunit protein bL35 (65 aa).

The segment at 30-65 is disordered; sequence AFRSHLAQNKSTKQKRQSKHGTFMHPTDYKRLKDLM. The segment covering 56–65 has biased composition (basic and acidic residues); that stretch reads TDYKRLKDLM.

The protein belongs to the bacterial ribosomal protein bL35 family.

The protein is Large ribosomal subunit protein bL35 of Mycoplasma mobile (strain ATCC 43663 / 163K / NCTC 11711) (Mesomycoplasma mobile).